A 185-amino-acid polypeptide reads, in one-letter code: MISVNDFRTGLTIEVDGDIWRVIEFQHVKPGKGAAFVRSKLRNLRTGAIQEKTFRAGEKVSKAQIDNRKMQYLYANGDQHVFMDMESYEQIELPAKQIEHELKFLKENMEVFIMMYQGETIGVELPNTVELKVVETEPGIKGDTASGGSKPATLETGLVVQVPFFVNEGDVLIINTTDGTYVSRA.

The protein belongs to the elongation factor P family.

The protein resides in the cytoplasm. It functions in the pathway protein biosynthesis; polypeptide chain elongation. Its function is as follows. Involved in peptide bond synthesis. Stimulates efficient translation and peptide-bond synthesis on native or reconstituted 70S ribosomes in vitro. Probably functions indirectly by altering the affinity of the ribosome for aminoacyl-tRNA, thus increasing their reactivity as acceptors for peptidyl transferase. This is Elongation factor P from Anoxybacillus flavithermus (strain DSM 21510 / WK1).